The following is a 1238-amino-acid chain: MANISSPFGQNEWLVEEMYRKFRDDPSSVDPSWHEFLVDYNPESTQEATEPAVVKPAAAPAKPAPAPAPAKPAAGPPAAGNGSPAAAPSAKPAAAPAKAPAPPPAEGDEMQVLRGAAAAVVKNMSASLDVPTATSVRAVPAKLLIDNRIVINNQLKRNRGGKISFTHLLGYALVQAVKKFPNMNRHYLDVDGKPNAVTPAHTNLGLAIDLQGKDGKRALVVAGIKRCETMRFAQFVTAYEDIVRRARDGKLTAEDFSGVTISLTNPGTIGTVHSVPRLMAGQGAIIGVGAMEYPAEFQGASEERIAELGIGKLITLTSTYDHRIIQGAESGDFLRTIHQMLLADEFWDEIFRELSIPYLPVRWRPDNPDSIVDKNARIIELIAAYRNRGHLMADIDPLRLDKTRFRSHPDLDVCTHGLTLWDLDRSFKVGGCFAGPQNMKLRDVLSILRDTYCRHVGVEYTHILEPEQQQWLQQRVEAKHVKPTVAQQKYVLSKLNAAEAFETFLQTKYVGQKRFSLEGAESVIPMMDAAIDQCAEYGLDEVVIGMPHRGRLNVLANIVGKPYSQIFSEFEGNLNPSQAHGSGDVKYHLGATGVYLQMFGDNDIQVSLTANPSHLEAVDPVLEGLVRAKQDLLEHGETDTENQRAFSVVPMMLHGDAAFAGQGVVAETLNLANLPGYRVGGTIHIIVNNQIGFTTAPEYSRSTEYCTDVAKTIGAPIFHVNGDDPEACVWVARLAVDFRQRFNKDVIIDMLCYRRRGHNEGDDPSMTNPRMYDVVDTKRGVRKSYTEALIGRGDISIKEAEDALRDYQGQLEQVFNEVRELEKHGAQPSESVESDQMIPAGLATAVDKSLLARIGDAFLAVPDGFTTHPRVQPVLEKRREMAYEGKIDWAFAELLALGSLVAEGKLVRFSGQDTRRGTFSQRHSVIIDRHTREEFTPLQLLTTNKDGSPTGGKFLVYDSPLSEYAAVGFEYGYTVGNPDAVVLWEAQFGDFVNGAQSIIDEFISSGEAKWGQLSNVVLLLPHGHEGQGPDHTSGRIERFLQLWAEGSMTIAMPSTPSNYFHLLRRHALDGIQRPLIVFTPKSMLRNKAAVSDIKDFTEIKFRSVLEEPTYEDGVGDRNLVNRILLTSGKIYYEMVARKAKDKREDVAIVRVEQLAPLPRRRLRETLDRYPNAKEFFWVQEEPANQGAWPRFGLELPELLPEKLSGVKRISRRAMSAPSSGSSKVHAVEQQEILDTAFG.

The segment at 1–41 is 2-oxoglutarate dehydrogenase E1, N-terminal part; it reads MANISSPFGQNEWLVEEMYRKFRDDPSSVDPSWHEFLVDYN. Positions 40–108 are disordered; sequence YNPESTQEAT…APAPPPAEGD (69 aa). Residues 42–94 form a linker region; sequence PESTQEATEPAVVKPAAAPAKPAPAPAPAKPAAGPPAAGNGSPAAAPSAKPAA. Low complexity-rich tracts occupy residues 51–61 and 71–98; these read PAVVKPAAAPA and KPAA…APAK. The succinyltransferase E2 stretch occupies residues 95–343; sequence APAKAPAPPP…LRTIHQMLLA (249 aa). The active-site Proton acceptor; for succinyltransferase activity is histidine 322. The tract at residues 344–1238 is 2-oxoglutarate dehydrogenase E1, C-terminal part; sequence DEFWDEIFRE…QQEILDTAFG (895 aa). Arginine 549 contacts thiamine diphosphate. The 2-oxoglutarate site is built by histidine 588 and serine 613. Thiamine diphosphate contacts are provided by serine 613, leucine 615, aspartate 656, alanine 657, alanine 658, and asparagine 689. A Mg(2+)-binding site is contributed by aspartate 656. Mg(2+)-binding residues include asparagine 689 and isoleucine 691. Residues 794–824 adopt a coiled-coil conformation; it reads DISIKEAEDALRDYQGQLEQVFNEVRELEKH. A 2-oxoglutarate-binding site is contributed by histidine 1031. Acetyl-CoA-binding residues include threonine 1049, arginine 1065, lysine 1100, serine 1103, glutamine 1153, arginine 1160, and arginine 1161.

The protein belongs to the 2-oxoacid dehydrogenase family. Kgd subfamily. Homodimer. The 2-oxoglutarate dehydrogenase (ODH) complex contains multiple copies of three enzymatic components: 2-oxoglutarate dehydrogenase (E1), dihydrolipoamide succinyltransferase (E2) and lipoamide dehydrogenase (E3). Mg(2+) serves as cofactor. Requires thiamine diphosphate as cofactor.

It catalyses the reaction glyoxylate + 2-oxoglutarate + H(+) = 2-hydroxy-3-oxoadipate + CO2. It carries out the reaction 2-oxoglutarate + H(+) = succinate semialdehyde + CO2. The enzyme catalyses N(6)-[(R)-lipoyl]-L-lysyl-[protein] + 2-oxoglutarate + H(+) = N(6)-[(R)-S(8)-succinyldihydrolipoyl]-L-lysyl-[protein] + CO2. The catalysed reaction is N(6)-[(R)-dihydrolipoyl]-L-lysyl-[protein] + succinyl-CoA = N(6)-[(R)-S(8)-succinyldihydrolipoyl]-L-lysyl-[protein] + CoA. It functions in the pathway carbohydrate metabolism; tricarboxylic acid cycle; succinate from 2-oxoglutarate (transferase route): step 1/2. The protein operates within carbohydrate metabolism; tricarboxylic acid cycle; succinyl-CoA from 2-oxoglutarate (dehydrogenase route): step 1/1. Its activity is regulated as follows. Alpha-ketoglutarate dehydrogenase and decarboxylase activities are inhibited by unphosphorylated GarA, and allosterically activated by acetyl-CoA, the main substrate of the TCA cycle. Shows three enzymatic activities that share a first common step, the attack of thiamine-PP on 2-oxoglutarate (alpha-ketoglutarate, KG), leading to the formation of an enamine-thiamine-PP intermediate upon decarboxylation. Thus, displays KGD activity, catalyzing the decarboxylation from five-carbon 2-oxoglutarate to four-carbon succinate semialdehyde (SSA). Also catalyzes C-C bond formation between the activated aldehyde formed after decarboxylation of alpha-ketoglutarate and the carbonyl of glyoxylate (GLX), to yield 2-hydroxy-3-oxoadipate (HOA), which spontaneously decarboxylates to form 5-hydroxylevulinate (HLA). And is also a component of the 2-oxoglutarate dehydrogenase (ODH) complex, that catalyzes the overall conversion of 2-oxoglutarate to succinyl-CoA and CO(2). The KG decarboxylase and KG dehydrogenase reactions provide two alternative, tightly regulated, pathways connecting the oxidative and reductive branches of the TCA cycle. The chain is Multifunctional 2-oxoglutarate metabolism enzyme (kgd) from Mycobacterium ulcerans (strain Agy99).